We begin with the raw amino-acid sequence, 388 residues long: Succinate--CoA ligase [ADP-forming] subunit beta (388 aa).

In terms of domain architecture, ATP-grasp spans 9-244; the sequence is KQLFAEYGLP…PSQDDAREAH (236 aa). Residues Lys-46, 53-55, Glu-99, Thr-102, and Glu-107 contribute to the ATP site; that span reads GRG. Positions 199 and 213 each coordinate Mg(2+). Substrate-binding positions include Asn-264 and 321–323; that span reads GIV.

It belongs to the succinate/malate CoA ligase beta subunit family. Heterotetramer of two alpha and two beta subunits. The cofactor is Mg(2+).

The enzyme catalyses succinate + ATP + CoA = succinyl-CoA + ADP + phosphate. It catalyses the reaction GTP + succinate + CoA = succinyl-CoA + GDP + phosphate. Its pathway is carbohydrate metabolism; tricarboxylic acid cycle; succinate from succinyl-CoA (ligase route): step 1/1. Functionally, succinyl-CoA synthetase functions in the citric acid cycle (TCA), coupling the hydrolysis of succinyl-CoA to the synthesis of either ATP or GTP and thus represents the only step of substrate-level phosphorylation in the TCA. The beta subunit provides nucleotide specificity of the enzyme and binds the substrate succinate, while the binding sites for coenzyme A and phosphate are found in the alpha subunit. This Pseudomonas aeruginosa (strain UCBPP-PA14) protein is Succinate--CoA ligase [ADP-forming] subunit beta.